Consider the following 125-residue polypeptide: Steroid Delta-isomerase (125 aa).

The active-site Proton donor is Y14. The active-site Proton acceptor is the D38. Position 99 (D99) interacts with substrate.

Homodimer.

It carries out the reaction a 3-oxo-Delta(5)-steroid = a 3-oxo-Delta(4)-steroid. This is Steroid Delta-isomerase (ksi) from Comamonas testosteroni (Pseudomonas testosteroni).